We begin with the raw amino-acid sequence, 208 residues long: Small ribosomal subunit protein uS4 (208 aa).

The S4 RNA-binding domain occupies 97–160 (SRLDNIVFRL…KKNDKIAEAL (64 aa)).

Belongs to the universal ribosomal protein uS4 family. Part of the 30S ribosomal subunit. Contacts protein S5. The interaction surface between S4 and S5 is involved in control of translational fidelity.

Functionally, one of the primary rRNA binding proteins, it binds directly to 16S rRNA where it nucleates assembly of the body of the 30S subunit. In terms of biological role, with S5 and S12 plays an important role in translational accuracy. The protein is Small ribosomal subunit protein uS4 of Mesoplasma florum (strain ATCC 33453 / NBRC 100688 / NCTC 11704 / L1) (Acholeplasma florum).